A 311-amino-acid polypeptide reads, in one-letter code: Glutamyl-Q tRNA(Asp) synthetase (311 aa).

L-glutamate is bound by residues 14-18 (RYAPS) and Glu50. The 'HIGH' region motif lies at 17–27 (PSPSGDLHLGN). Zn(2+) contacts are provided by Cys104, Cys106, Tyr125, and Cys129. Positions 186 and 204 each coordinate L-glutamate. A 'KMSKS' region motif is present at residues 242-246 (RLAKR). Lys245 lines the ATP pocket.

Belongs to the class-I aminoacyl-tRNA synthetase family. GluQ subfamily. It depends on Zn(2+) as a cofactor.

Functionally, catalyzes the tRNA-independent activation of glutamate in presence of ATP and the subsequent transfer of glutamate onto a tRNA(Asp). Glutamate is transferred on the 2-amino-5-(4,5-dihydroxy-2-cyclopenten-1-yl) moiety of the queuosine in the wobble position of the QUC anticodon. The chain is Glutamyl-Q tRNA(Asp) synthetase from Nocardia farcinica (strain IFM 10152).